The sequence spans 163 residues: Photosystem II extrinsic protein V (163 aa).

The N-terminal stretch at 1-26 (MLKKCVWLAVALCLCLWQFTMGTALA) is a signal peptide. His67 and His118 together coordinate heme c.

It belongs to the cytochrome c family. PsbV subfamily. PSII is composed of 1 copy each of membrane proteins PsbA, PsbB, PsbC, PsbD, PsbE, PsbF, PsbH, PsbI, PsbJ, PsbK, PsbL, PsbM, PsbT, PsbX, PsbY, PsbZ, Psb30/Ycf12, peripheral proteins PsbO, CyanoQ (PsbQ), PsbU, PsbV and a large number of cofactors. It forms dimeric complexes. Heme c serves as cofactor.

The protein localises to the cellular thylakoid membrane. Its function is as follows. One of the extrinsic, lumenal subunits of photosystem II (PSII). PSII is a light-driven water plastoquinone oxidoreductase, using light energy to abstract electrons from H(2)O, generating a proton gradient subsequently used for ATP formation. The extrinsic proteins stabilize the structure of photosystem II oxygen-evolving complex (OEC), the ion environment of oxygen evolution and protect the OEC against heat-induced inactivation. Low-potential cytochrome c that plays a role in the OEC of PSII. This Thermosynechococcus vestitus (strain NIES-2133 / IAM M-273 / BP-1) protein is Photosystem II extrinsic protein V.